We begin with the raw amino-acid sequence, 281 residues long: Cytochrome bc1 complex cytochrome c subunit (281 aa).

Residues 17-37 (AAGAMALAVGLTGAGILVNAV) traverse the membrane as a helical segment. 2 consecutive Cytochrome c domains span residues 52 to 132 (ALIQ…EANG) and 162 to 240 (ADVA…KSAK). Residues Cys65, Cys68, His69, Cys175, Cys178, and His179 each coordinate heme c. A helical membrane pass occupies residues 259 to 279 (GMMMWLVGIVVLVAAAMWIGS).

As to quaternary structure, the cytochrome bc1 complex is composed of a cytochrome b (QcrB), the Rieske iron-sulfur protein (QcrA) and a diheme cytochrome c (QcrC) subunit. The bc1 complex forms a supercomplex with cytochrome c oxidase (cytochrome aa3). Post-translationally, binds 2 heme c groups covalently per subunit.

The protein localises to the cell membrane. It carries out the reaction a quinol + 2 Fe(III)-[cytochrome c](out) = a quinone + 2 Fe(II)-[cytochrome c](out) + 2 H(+)(out). In terms of biological role, cytochrome c1 subunit of the cytochrome bc1 complex, an essential component of the respiratory electron transport chain required for ATP synthesis. The bc1 complex catalyzes the oxidation of menaquinol and the reduction of cytochrome c in the respiratory chain. The bc1 complex operates through a Q-cycle mechanism that couples electron transfer to generation of the proton gradient that drives ATP synthesis. This is Cytochrome bc1 complex cytochrome c subunit (qcrC) from Corynebacterium diphtheriae (strain ATCC 700971 / NCTC 13129 / Biotype gravis).